The chain runs to 64 residues: Defensin beta 4A (64 aa).

The N-terminal stretch at 1 to 23 (MRVLYLLFSFLFIFLMPLPGVFG) is a signal peptide. 3 disulfides stabilise this stretch: C31–C60, C38–C53, and C43–C61. Positions 33-48 (KNGAICHPVFCPRRYK) are phosphatidylinositol 4,5-bisphosphate (PIP2) binding.

It belongs to the beta-defensin family. LAP/TAP subfamily. As to quaternary structure, monomer. Homodimer.

It localises to the secreted. Its function is as follows. Exhibits antimicrobial activity against Gram-negative bacteria and Gram-positive bacteria, with highest activity against Gram-negative bacteria. Antimicrobial activity against P.aruginosa seems to be salt-sensitive and is reduced with high salt concentrations greater than 25 mM. Also exhibits antimicrobial activity against the yeast C.albicans. Permeabilizes C.albicans cell membranes via targeting plasma membrane lipid phosphatidylinositol 4,5-bisphosphate (PIP2), thereby leading to cell fragmentation and cell death. Acts as a ligand for C-C chemokine receptor CCR6. Binds to CCR6 and induces chemotactic activity of CCR6-expressing cells, such as immature dendritic cells and memory T cells. The sequence is that of Defensin beta 4A (DEFB4A) from Macaca mulatta (Rhesus macaque).